A 759-amino-acid polypeptide reads, in one-letter code: uncharacterized protein (759 aa).

In terms of domain architecture, MCM spans 352 to 556 (VIQKLSDYAF…KDEDIADFSI (205 aa)). 397 to 404 (SDPGVGKS) contributes to the ATP binding site.

It belongs to the MCM family.

This is an uncharacterized protein from Methanocaldococcus jannaschii (strain ATCC 43067 / DSM 2661 / JAL-1 / JCM 10045 / NBRC 100440) (Methanococcus jannaschii).